Reading from the N-terminus, the 348-residue chain is Eukaryotic translation initiation factor 3 subunit F (348 aa).

An MPN domain is found at 30 to 166; sequence VVIQPQAIFS…TRTYISAPVG (137 aa). Over residues 312–327 the composition is skewed to gly residues; the sequence is STAIGGTGAESGGQRG. Residues 312–348 form a disordered region; sequence STAIGGTGAESGGQRGGQRNNRQRGGQQRNQAEELRA. Low complexity predominate over residues 328–341; that stretch reads GQRNNRQRGGQQRN.

It belongs to the eIF-3 subunit F family. Component of the eukaryotic translation initiation factor 3 (eIF-3) complex.

It localises to the cytoplasm. Component of the eukaryotic translation initiation factor 3 (eIF-3) complex, which is involved in protein synthesis of a specialized repertoire of mRNAs and, together with other initiation factors, stimulates binding of mRNA and methionyl-tRNAi to the 40S ribosome. The eIF-3 complex specifically targets and initiates translation of a subset of mRNAs involved in cell proliferation. The sequence is that of Eukaryotic translation initiation factor 3 subunit F from Coccidioides immitis (strain RS) (Valley fever fungus).